Consider the following 365-residue polypeptide: Alternative oxidase 2, mitochondrial (365 aa).

The segment covering Thr32–Ala46 has biased composition (low complexity). The segment at Thr32–His52 is disordered. Fe cation-binding residues include Glu166, Glu205, and His208. The chain crosses the membrane as a helical span at residues Trp220 to Leu242. Fe cation contacts are provided by Glu256, Glu257, Glu312, and His315. The segment at Gln345–Leu365 is disordered.

The protein belongs to the alternative oxidase family. Requires Fe cation as cofactor.

It is found in the mitochondrion inner membrane. Functionally, catalyzes cyanide-resistant oxygen consumption. May increase respiration when the cytochrome respiratory pathway is restricted, or in response to low temperatures. This is Alternative oxidase 2, mitochondrial (AOX2) from Candida albicans (Yeast).